The sequence spans 554 residues: Formate--tetrahydrofolate ligase (554 aa).

64 to 71 (TPAGEGKS) lines the ATP pocket.

The protein belongs to the formate--tetrahydrofolate ligase family.

The enzyme catalyses (6S)-5,6,7,8-tetrahydrofolate + formate + ATP = (6R)-10-formyltetrahydrofolate + ADP + phosphate. Its pathway is one-carbon metabolism; tetrahydrofolate interconversion. This Leuconostoc citreum (strain KM20) protein is Formate--tetrahydrofolate ligase.